A 371-amino-acid chain; its full sequence is Phospho-N-acetylmuramoyl-pentapeptide-transferase (371 aa).

The next 10 helical transmembrane spans lie at 25-45, 79-99, 104-124, 139-159, 179-199, 210-230, 247-267, 274-294, 299-319, and 348-368; these read YLTFRTGMSMLTAYVVAVAMG, TMGGFMILAGLFVGSLLFADL, VWVVLGITGSFGVLGFMDDYA, KLIAQFIISILAAVVLIIFAP, LVINLGWFYVAFAAITIAGFS, GLAIVPVMFAASTFGLIAYLV, VGELAVVCGAIIGGGMGFLWY, IFMGDTGSLALGGALGSIAVC, LVLGIVGGLFVAEALSVMIQV, and TVVIRFWIVAMMLSFVGLATL.

It belongs to the glycosyltransferase 4 family. MraY subfamily. The cofactor is Mg(2+).

It localises to the cell inner membrane. The catalysed reaction is UDP-N-acetyl-alpha-D-muramoyl-L-alanyl-gamma-D-glutamyl-meso-2,6-diaminopimeloyl-D-alanyl-D-alanine + di-trans,octa-cis-undecaprenyl phosphate = di-trans,octa-cis-undecaprenyl diphospho-N-acetyl-alpha-D-muramoyl-L-alanyl-D-glutamyl-meso-2,6-diaminopimeloyl-D-alanyl-D-alanine + UMP. It functions in the pathway cell wall biogenesis; peptidoglycan biosynthesis. Functionally, catalyzes the initial step of the lipid cycle reactions in the biosynthesis of the cell wall peptidoglycan: transfers peptidoglycan precursor phospho-MurNAc-pentapeptide from UDP-MurNAc-pentapeptide onto the lipid carrier undecaprenyl phosphate, yielding undecaprenyl-pyrophosphoryl-MurNAc-pentapeptide, known as lipid I. The sequence is that of Phospho-N-acetylmuramoyl-pentapeptide-transferase from Caulobacter sp. (strain K31).